We begin with the raw amino-acid sequence, 314 residues long: uncharacterized protein (314 aa).

The HTH araC/xylS-type domain occupies threonine 192–leucine 289. 2 DNA-binding regions (H-T-H motif) span residues threonine 209–leucine 230 and isoleucine 257–isoleucine 279.

This is an uncharacterized protein from Bacillus subtilis (strain 168).